Consider the following 378-residue polypeptide: Opsin Rh4 (378 aa).

Residues 1 to 53 (MEPLCNASEPPLRPEARSSGNGDLQFLGWNVPPDQIQYIPEHWLTQLEPPASM) are Extracellular-facing. A glycan (N-linked (GlcNAc...) asparagine) is linked at Asn6. Residues 54–78 (HYMLGVFYIFLFCASTVGNGMVIWI) form a helical membrane-spanning segment. Residues 79 to 90 (FSTSKSLRTPSN) lie on the Cytoplasmic side of the membrane. A helical membrane pass occupies residues 91–111 (MFVLNLAVFDLIMCLKAPIFI). At 112–127 (YNSFHRGFALGNTWCQ) the chain is on the extracellular side. Cys126 and Cys203 form a disulfide bridge. Residues 128–148 (IFASIGSYSGIGAGMTNAAIG) traverse the membrane as a helical segment. Residues 149-167 (YDRYNVITKPMNRNMTFTK) lie on the Cytoplasmic side of the membrane. A helical membrane pass occupies residues 168–192 (AVIMNIIIWLYCTPWVVLPLTQFWD). Residues 193–216 (RFVPEGYLTSCSFDYLSDNFDTRL) are Extracellular-facing. A helical transmembrane segment spans residues 217–244 (FVGTIFFFSFVCPTLMILYYYSQIVGHV). Residues 245–280 (FSHEKALREQAKKMNVESLRSNVDKSKETAEIRIAK) are Cytoplasmic-facing. The chain crosses the membrane as a helical span at residues 281–304 (AAITICFLFFVSWTPYGVMSLIGA). The Extracellular portion of the chain corresponds to 305–312 (FGDKSLLT). Residues 313–337 (PGATMIPACTCKLVACIDPFVYAIS) traverse the membrane as a helical segment. Lys324 is subject to N6-(retinylidene)lysine. Topologically, residues 338–378 (HPRYRLELQKRCPWLGVNEKSGEISSAQSTTTQEQQQTTAA) are cytoplasmic.

Belongs to the G-protein coupled receptor 1 family. Opsin subfamily. Phosphorylated on some or all of the serine and threonine residues present in the C-terminal region.

The protein resides in the membrane. Visual pigments are the light-absorbing molecules that mediate vision. They consist of an apoprotein, opsin, covalently linked to cis-retinal. The chain is Opsin Rh4 (Rh4) from Drosophila melanogaster (Fruit fly).